A 404-amino-acid chain; its full sequence is Cysteine desulfurase IscS (404 aa).

Residues 75–76, Asn-155, Gln-183, and 203–205 each bind pyridoxal 5'-phosphate; these read AT and SAH. The residue at position 206 (Lys-206) is an N6-(pyridoxal phosphate)lysine. Thr-243 is a pyridoxal 5'-phosphate binding site. The active-site Cysteine persulfide intermediate is the Cys-328. Position 328 (Cys-328) interacts with [2Fe-2S] cluster.

It belongs to the class-V pyridoxal-phosphate-dependent aminotransferase family. NifS/IscS subfamily. In terms of assembly, homodimer. Forms a heterotetramer with IscU, interacts with other sulfur acceptors. The cofactor is pyridoxal 5'-phosphate.

The protein localises to the cytoplasm. The catalysed reaction is (sulfur carrier)-H + L-cysteine = (sulfur carrier)-SH + L-alanine. It participates in cofactor biosynthesis; iron-sulfur cluster biosynthesis. Master enzyme that delivers sulfur to a number of partners involved in Fe-S cluster assembly, tRNA modification or cofactor biosynthesis. Catalyzes the removal of elemental sulfur atoms from cysteine to produce alanine. Functions as a sulfur delivery protein for Fe-S cluster synthesis onto IscU, an Fe-S scaffold assembly protein, as well as other S acceptor proteins. The chain is Cysteine desulfurase IscS from Neisseria meningitidis serogroup C / serotype 2a (strain ATCC 700532 / DSM 15464 / FAM18).